The chain runs to 387 residues: Succinate--CoA ligase [ADP-forming] subunit beta (387 aa).

In terms of domain architecture, ATP-grasp spans 9–245 (KDLLESYGLK…KSQENAKELK (237 aa)). ATP is bound by residues Lys46, 53-55 (GRG), Glu100, Tyr103, and Glu108. Residues Asn200 and Asp214 each contribute to the Mg(2+) site. Substrate contacts are provided by residues Asn265 and 322–324 (GIV).

Belongs to the succinate/malate CoA ligase beta subunit family. Heterotetramer of two alpha and two beta subunits. The cofactor is Mg(2+).

It carries out the reaction succinate + ATP + CoA = succinyl-CoA + ADP + phosphate. It catalyses the reaction GTP + succinate + CoA = succinyl-CoA + GDP + phosphate. It functions in the pathway carbohydrate metabolism; tricarboxylic acid cycle; succinate from succinyl-CoA (ligase route): step 1/1. Succinyl-CoA synthetase functions in the citric acid cycle (TCA), coupling the hydrolysis of succinyl-CoA to the synthesis of either ATP or GTP and thus represents the only step of substrate-level phosphorylation in the TCA. The beta subunit provides nucleotide specificity of the enzyme and binds the substrate succinate, while the binding sites for coenzyme A and phosphate are found in the alpha subunit. This is Succinate--CoA ligase [ADP-forming] subunit beta from Francisella tularensis subsp. holarctica (strain FTNF002-00 / FTA).